The following is a 39-amino-acid chain: Glutenin, high molecular weight subunit PC237 (39 aa).

The protein belongs to the gliadin/glutenin family. Disulfide-bridge linked aggregates.

In terms of biological role, glutenins are high-molecular weight seed storage proteins of wheat endosperm. Thought to be responsible for the visco-elastic property of wheat dough. In Triticum aestivum (Wheat), this protein is Glutenin, high molecular weight subunit PC237.